Consider the following 161-residue polypeptide: 2-C-methyl-D-erythritol 2,4-cyclodiphosphate synthase (161 aa).

Residues Asp-10 and His-12 each coordinate a divalent metal cation. Residues 10–12 (DVH) and 36–37 (HS) each bind 4-CDP-2-C-methyl-D-erythritol 2-phosphate. His-44 lines the a divalent metal cation pocket. 4-CDP-2-C-methyl-D-erythritol 2-phosphate contacts are provided by residues 58–60 (DIG), 63–67 (FSDTD), and Arg-144.

It belongs to the IspF family. Homotrimer. A divalent metal cation serves as cofactor.

The enzyme catalyses 4-CDP-2-C-methyl-D-erythritol 2-phosphate = 2-C-methyl-D-erythritol 2,4-cyclic diphosphate + CMP. It functions in the pathway isoprenoid biosynthesis; isopentenyl diphosphate biosynthesis via DXP pathway; isopentenyl diphosphate from 1-deoxy-D-xylulose 5-phosphate: step 4/6. In terms of biological role, involved in the biosynthesis of isopentenyl diphosphate (IPP) and dimethylallyl diphosphate (DMAPP), two major building blocks of isoprenoid compounds. Catalyzes the conversion of 4-diphosphocytidyl-2-C-methyl-D-erythritol 2-phosphate (CDP-ME2P) to 2-C-methyl-D-erythritol 2,4-cyclodiphosphate (ME-CPP) with a corresponding release of cytidine 5-monophosphate (CMP). The protein is 2-C-methyl-D-erythritol 2,4-cyclodiphosphate synthase of Burkholderia ambifaria (strain ATCC BAA-244 / DSM 16087 / CCUG 44356 / LMG 19182 / AMMD) (Burkholderia cepacia (strain AMMD)).